The primary structure comprises 359 residues: Endoglucanase (359 aa).

Residues 1–23 (MPLRALVAVIVTTAVMLVPRAWA) form the signal peptide. Catalysis depends on Glu53, which acts as the Proton donor. Asp110 functions as the Nucleophile in the catalytic mechanism.

It belongs to the glycosyl hydrolase 8 (cellulase D) family.

It carries out the reaction Endohydrolysis of (1-&gt;4)-beta-D-glucosidic linkages in cellulose, lichenin and cereal beta-D-glucans.. In terms of biological role, the biological conversion of cellulose to glucose generally requires three types of hydrolytic enzymes: (1) Endoglucanases which cut internal beta-1,4-glucosidic bonds; (2) Exocellobiohydrolases that cut the disaccharide cellobiose from the non-reducing end of the cellulose polymer chain; (3) Beta-1,4-glucosidases which hydrolyze the cellobiose and other short cello-oligosaccharides to glucose. This is Endoglucanase from Cellulomonas uda.